Here is a 361-residue protein sequence, read N- to C-terminus: uncharacterized protein (361 aa).

This is an uncharacterized protein from Escherichia coli (strain K12).